A 100-amino-acid chain; its full sequence is Aspartyl/glutamyl-tRNA(Asn/Gln) amidotransferase subunit C (100 aa).

It belongs to the GatC family. In terms of assembly, heterotrimer of A, B and C subunits.

The catalysed reaction is L-glutamyl-tRNA(Gln) + L-glutamine + ATP + H2O = L-glutaminyl-tRNA(Gln) + L-glutamate + ADP + phosphate + H(+). It carries out the reaction L-aspartyl-tRNA(Asn) + L-glutamine + ATP + H2O = L-asparaginyl-tRNA(Asn) + L-glutamate + ADP + phosphate + 2 H(+). In terms of biological role, allows the formation of correctly charged Asn-tRNA(Asn) or Gln-tRNA(Gln) through the transamidation of misacylated Asp-tRNA(Asn) or Glu-tRNA(Gln) in organisms which lack either or both of asparaginyl-tRNA or glutaminyl-tRNA synthetases. The reaction takes place in the presence of glutamine and ATP through an activated phospho-Asp-tRNA(Asn) or phospho-Glu-tRNA(Gln). This Streptococcus pneumoniae (strain Taiwan19F-14) protein is Aspartyl/glutamyl-tRNA(Asn/Gln) amidotransferase subunit C.